Here is a 367-residue protein sequence, read N- to C-terminus: UDP-N-acetylglucosamine--N-acetylmuramyl-(pentapeptide) pyrophosphoryl-undecaprenol N-acetylglucosamine transferase (367 aa).

UDP-N-acetyl-alpha-D-glucosamine-binding positions include 11–13 (TAG), Asn125, Arg163, Ser197, and Gln289.

It belongs to the glycosyltransferase 28 family. MurG subfamily.

It localises to the cell membrane. It catalyses the reaction di-trans,octa-cis-undecaprenyl diphospho-N-acetyl-alpha-D-muramoyl-L-alanyl-D-glutamyl-meso-2,6-diaminopimeloyl-D-alanyl-D-alanine + UDP-N-acetyl-alpha-D-glucosamine = di-trans,octa-cis-undecaprenyl diphospho-[N-acetyl-alpha-D-glucosaminyl-(1-&gt;4)]-N-acetyl-alpha-D-muramoyl-L-alanyl-D-glutamyl-meso-2,6-diaminopimeloyl-D-alanyl-D-alanine + UDP + H(+). It participates in cell wall biogenesis; peptidoglycan biosynthesis. Functionally, cell wall formation. Catalyzes the transfer of a GlcNAc subunit on undecaprenyl-pyrophosphoryl-MurNAc-pentapeptide (lipid intermediate I) to form undecaprenyl-pyrophosphoryl-MurNAc-(pentapeptide)GlcNAc (lipid intermediate II). This is UDP-N-acetylglucosamine--N-acetylmuramyl-(pentapeptide) pyrophosphoryl-undecaprenol N-acetylglucosamine transferase from Clavibacter sepedonicus (Clavibacter michiganensis subsp. sepedonicus).